Reading from the N-terminus, the 314-residue chain is Porphobilinogen deaminase (314 aa).

Position 249 is an S-(dipyrrolylmethanemethyl)cysteine (Cys249).

The protein belongs to the HMBS family. Monomer. Requires dipyrromethane as cofactor.

It catalyses the reaction 4 porphobilinogen + H2O = hydroxymethylbilane + 4 NH4(+). It participates in porphyrin-containing compound metabolism; protoporphyrin-IX biosynthesis; coproporphyrinogen-III from 5-aminolevulinate: step 2/4. Tetrapolymerization of the monopyrrole PBG into the hydroxymethylbilane pre-uroporphyrinogen in several discrete steps. This chain is Porphobilinogen deaminase, found in Brucella suis biovar 1 (strain 1330).